The primary structure comprises 270 residues: 26S proteasome regulatory subunit rpn12 (270 aa).

Positions 65–237 (CDIESFARYA…LETEDGMLID (173 aa)) constitute a PCI domain.

The protein belongs to the proteasome subunit S14 family.

Acts as a regulatory subunit of the 26S proteasome which is involved in the ATP-dependent degradation of ubiquitinated proteins. The polypeptide is 26S proteasome regulatory subunit rpn12 (rpn12) (Schizosaccharomyces pombe (strain 972 / ATCC 24843) (Fission yeast)).